Reading from the N-terminus, the 245-residue chain is uncharacterized protein (245 aa).

Residues 162–174 (KEQSDVTTSERTR) are compositionally biased toward basic and acidic residues. The tract at residues 162 to 183 (KEQSDVTTSERTRSPPGSSKTT) is disordered.

This is an uncharacterized protein from Homo sapiens (Human).